The chain runs to 54 residues: Large ribosomal subunit protein bL32c (54 aa).

Over residues 1 to 25 the composition is skewed to basic residues; the sequence is MAVPKKRTSKAKKNSRKANWKRKAA. The tract at residues 1–26 is disordered; that stretch reads MAVPKKRTSKAKKNSRKANWKRKAAK.

Belongs to the bacterial ribosomal protein bL32 family.

It localises to the plastid. The protein localises to the chloroplast. The protein is Large ribosomal subunit protein bL32c of Thalassiosira pseudonana (Marine diatom).